Here is a 301-residue protein sequence, read N- to C-terminus: Homoserine O-acetyltransferase (301 aa).

The active-site Acyl-thioester intermediate is C142. K163 and S192 together coordinate substrate. Catalysis depends on H235, which acts as the Proton acceptor. E237 is an active-site residue. A substrate-binding site is contributed by R249.

The protein belongs to the MetA family.

The protein resides in the cytoplasm. It carries out the reaction L-homoserine + acetyl-CoA = O-acetyl-L-homoserine + CoA. It functions in the pathway amino-acid biosynthesis; L-methionine biosynthesis via de novo pathway; O-acetyl-L-homoserine from L-homoserine: step 1/1. In terms of biological role, transfers an acetyl group from acetyl-CoA to L-homoserine, forming acetyl-L-homoserine. The chain is Homoserine O-acetyltransferase from Novosphingobium aromaticivorans (strain ATCC 700278 / DSM 12444 / CCUG 56034 / CIP 105152 / NBRC 16084 / F199).